The sequence spans 613 residues: tRNA (uracil-5-)-methyltransferase homolog A (613 aa).

The tract at residues 1 to 46 is disordered; that stretch reads MSEPAAEVPEPMEDCGQDASAVPSSAAPLCQKEEAGPGPAAGPGTQ. An RRM domain is found at 63–136; sequence FKLELQNVPR…CPLSVRLARP (74 aa). The stretch at 170–200 forms a coiled coil; that stretch reads YTEQLEQKRLECERVLQKLAKEIGNTNRALL. A Phosphoserine modification is found at serine 368. Glutamine 401, glutamate 451, and aspartate 500 together coordinate S-adenosyl-L-methionine. The Nucleophile role is filled by cysteine 528. The Proton acceptor role is filled by glutamate 571.

The protein belongs to the class I-like SAM-binding methyltransferase superfamily. RNA M5U methyltransferase family. As to expression, widely expressed at low level. Expressed at higher level in proliferating cells.

The protein resides in the cytoplasm. It localises to the cytosol. It catalyses the reaction uridine(54) in tRNA + S-adenosyl-L-methionine = 5-methyluridine(54) in tRNA + S-adenosyl-L-homocysteine + H(+). The catalysed reaction is a uridine in mRNA + S-adenosyl-L-methionine = a 5-methyluridine in mRNA + S-adenosyl-L-homocysteine + H(+). In terms of biological role, S-adenosyl-L-methionine-dependent methyltransferase that catalyzes the formation of 5-methyl-uridine in tRNAs and some mRNAs. Mainly catalyzes the methylation of uridine at position 54 (m5U54) in cytosolic tRNAs. Also able to mediate the formation of 5-methyl-uridine in some mRNAs. The chain is tRNA (uracil-5-)-methyltransferase homolog A from Mus musculus (Mouse).